The following is a 158-amino-acid chain: MMMDILMYLFETYVHSDADLQVDQDQLEDELLRAGFHQKDIYKALHWLEELAALQQTDAQTAIAKSAPTSMRIYAPEEIERLDLESRGFLLFLEHINVLTPETREMVIDRVMGLETDEFELDDLKWIILMVLFNVPGNENAYTVMEELLYSKEQGILH.

Belongs to the Smg family.

The protein is Protein Smg homolog of Vibrio cholerae serotype O1 (strain ATCC 39315 / El Tor Inaba N16961).